The chain runs to 858 residues: Leucine--tRNA ligase (858 aa).

The short motif at 42 to 52 (PYPSGRLHMGH) is the 'HIGH' region element. Residues 618–622 (KMSKS) carry the 'KMSKS' region motif. Lysine 621 is an ATP binding site.

The protein belongs to the class-I aminoacyl-tRNA synthetase family.

Its subcellular location is the cytoplasm. The catalysed reaction is tRNA(Leu) + L-leucine + ATP = L-leucyl-tRNA(Leu) + AMP + diphosphate. This is Leucine--tRNA ligase from Vibrio cholerae serotype O1 (strain ATCC 39315 / El Tor Inaba N16961).